A 411-amino-acid chain; its full sequence is Phosphopentomutase (411 aa).

The Mn(2+) site is built by aspartate 14, aspartate 306, histidine 311, aspartate 347, histidine 348, and histidine 359.

It belongs to the phosphopentomutase family. Requires Mn(2+) as cofactor.

The protein localises to the cytoplasm. The catalysed reaction is 2-deoxy-alpha-D-ribose 1-phosphate = 2-deoxy-D-ribose 5-phosphate. The enzyme catalyses alpha-D-ribose 1-phosphate = D-ribose 5-phosphate. It participates in carbohydrate degradation; 2-deoxy-D-ribose 1-phosphate degradation; D-glyceraldehyde 3-phosphate and acetaldehyde from 2-deoxy-alpha-D-ribose 1-phosphate: step 1/2. Functionally, isomerase that catalyzes the conversion of deoxy-ribose 1-phosphate (dRib-1-P) and ribose 1-phosphate (Rib-1-P) to deoxy-ribose 5-phosphate (dRib-5-P) and ribose 5-phosphate (Rib-5-P), respectively. The chain is Phosphopentomutase from Lactococcus lactis subsp. cremoris (strain SK11).